The sequence spans 70 residues: DNA-directed RNA polymerases I, II, and III subunit rpabc5 (70 aa).

Positions 7, 10, 44, and 45 each coordinate Zn(2+).

Belongs to the archaeal Rpo10/eukaryotic RPB10 RNA polymerase subunit family. Component of the RNA polymerase I (Pol I), RNA polymerase II (Pol II) and RNA polymerase III (Pol III) complexes.

Its subcellular location is the nucleus. Its function is as follows. DNA-dependent RNA polymerase catalyzes the transcription of DNA into RNA using the four ribonucleoside triphosphates as substrates. Common component of RNA polymerases I, II and III which synthesize ribosomal RNA precursors, mRNA precursors and many functional non-coding RNAs, and a small RNAs, such as 5S rRNA and tRNAs, respectively. Pol II is the central component of the basal RNA polymerase II transcription machinery. Pols are composed of mobile elements that move relative to each other. In Pol II, RBP10 is part of the core element with the central large cleft. This Dictyostelium discoideum (Social amoeba) protein is DNA-directed RNA polymerases I, II, and III subunit rpabc5 (polr2l).